The chain runs to 1321 residues: Multidrug resistance protein pgp-1 (1321 aa).

Residues 1–77 (MLRNGSLRQS…YTTTLEKLLL (77 aa)) lie on the Cytoplasmic side of the membrane. Residues 77–381 (LFIGTLVAVI…AGPQLAVLGT (305 aa)) enclose the ABC transmembrane type-1 1 domain. The chain crosses the membrane as a helical span at residues 78–98 (FIGTLVAVITGAGLPLMSILQ). 2 N-linked (GlcNAc...) asparagine glycosylation sites follow: N115 and N125. Residues 144–164 (AMTVGMWAAGQITVTCYLYVA) traverse the membrane as a helical segment. N-linked (GlcNAc...) asparagine glycosylation is present at N190. 4 helical membrane-spanning segments follow: residues 213-233 (KIGMAFQYLSQFITGFIVAFT), 240-260 (LVMLAVTPIQALCGFAIAKSM), 321-341 (ISFGAMQASNFISFALAFYIG), and 350-370 (LNFGDMLTTFSSVMMGSMALG). At 371–753 (LAGPQLAVLG…LYHARPHALS (383 aa)) the chain is on the cytoplasmic side. In terms of domain architecture, ABC transporter 1 spans 416 to 652 (ITVENVHFTY…QGLYYDLVTA (237 aa)). 451–458 (GSSGCGKS) is an ATP binding site. 2 helical membrane-spanning segments follow: residues 754-774 (LFIGMSTATIGGFIYPTYSVF) and 798-818 (LMFLVLAAAQGICSFLMTFFM). Residues 754–1043 (LFIGMSTATI…ATSYFPEYAK (290 aa)) form the ABC transmembrane type-1 2 domain. A glycan (N-linked (GlcNAc...) asparagine) is linked at N850. A run of 4 helical transmembrane segments spans residues 874 to 894 (FSTVITTLVSMVAGIGLAFFY), 895 to 915 (GWQMALLIIAILPIVAFGQYL), 978 to 998 (IQGLSYGCASSVLYLLNTCAY), and 1017 to 1037 (VLRVMYAITISTSTLGFATSY). The Cytoplasmic portion of the chain corresponds to 1038 to 1321 (FPEYAKATFA…LTQKQMTEKK (284 aa)). Positions 1077 to 1315 (VIFKNVRFAY…KGAYYKLTQK (239 aa)) constitute an ABC transporter 2 domain. 1112 to 1119 (GPSGCGKS) is a binding site for ATP.

The protein belongs to the ABC transporter superfamily. ABCB family. Multidrug resistance exporter (TC 3.A.1.201) subfamily. As to expression, intestinal cells.

The protein localises to the membrane. The enzyme catalyses ATP + H2O + xenobioticSide 1 = ADP + phosphate + xenobioticSide 2.. Functionally, energy-dependent efflux pump responsible for decreased drug accumulation in multidrug-resistant cells. The protein is Multidrug resistance protein pgp-1 (pgp-1) of Caenorhabditis elegans.